We begin with the raw amino-acid sequence, 132 residues long: Small ribosomal subunit protein eS6 (132 aa).

Belongs to the eukaryotic ribosomal protein eS6 family.

The polypeptide is Small ribosomal subunit protein eS6 (Methanoculleus marisnigri (strain ATCC 35101 / DSM 1498 / JR1)).